Reading from the N-terminus, the 84-residue chain is Anaphase-promoting complex subunit 11 (84 aa).

The RING-type; atypical zinc finger occupies 34–77 (CPDCKLPGDDCPLIWGACNHAFHLHCILKWVNSQTSQAHCPMCR).

The protein belongs to the RING-box family. In terms of assembly, part of the APC/C complex composed of at least 10 subunits. Interacts with APC2.

It localises to the cytoplasm. The protein resides in the nucleus. It participates in protein modification; protein ubiquitination. In terms of biological role, component of the anaphase promoting complex/cyclosome (APC/C), a cell cycle-regulated E3 ubiquitin-protein ligase complex that controls progression through mitosis and the G1 phase of the cell cycle. The APC/C complex controls several key steps in the cell cycle by mediating ubiquitination and subsequent degradation of target proteins such as cyclins. The APC/C complex is required for the female gametophyte development and is involved in several aspect of development by controlling cell division and cell elongation. Involved in the control of endoreduplication. May recruit the E2 ubiquitin-conjugating enzymes to the complex. In Arabidopsis thaliana (Mouse-ear cress), this protein is Anaphase-promoting complex subunit 11.